The sequence spans 530 residues: Equilibrative nucleoside transporter 4 (530 aa).

The segment at 1 to 21 (MGSVGSQRLEEPSVAGTPDPG) is disordered. Residues 1–68 (MGSVGSQRLE…DEPVPDDRYH (68 aa)) lie on the Extracellular side of the membrane. Residues 69-89 (AIYFAMLLAGVGFLLPYNSFI) traverse the membrane as a helical segment. At 90–101 (TDVDYLHHKYPG) the chain is on the cytoplasmic side. The chain crosses the membrane as a helical span at residues 102-122 (TSIVFDMSLTYILVALAAVLL). Topologically, residues 123 to 139 (NNVLVERLTLHTRITAG) are extracellular. A helical membrane pass occupies residues 140-160 (YLLALGPLLFISICDVWLQLF). Topologically, residues 161–166 (SRDQAY) are cytoplasmic. The helical transmembrane segment at 167-187 (AINLAAVGTVAFGCTVQQSSF) threads the bilayer. Residues 188-231 (YGYTGMLPKRYTQGVMTGESTAGVMISLSRILTKLLLPDERAST) are Extracellular-facing. Residues 232–252 (LIFFLVSVALELLCFLLHLLV) traverse the membrane as a helical segment. Over 253-351 (RRSRFVLFYT…LLLHRYVVAR (99 aa)) the chain is Cytoplasmic. Residues 352 to 372 (VIWADMLSIAVTYFITLCLFP) traverse the membrane as a helical segment. The Extracellular portion of the chain corresponds to 373–381 (GLESEIRHC). Residues 382–402 (ILGEWLPILIMAVFNLSDFVG) traverse the membrane as a helical segment. Over 403–416 (KILAALPVDWRGTH) the chain is Cytoplasmic. A helical transmembrane segment spans residues 417–437 (LLACSCLRVVFIPLFILCVYP). The Extracellular segment spans residues 438-450 (SGMPALRHPAWPC). The helical transmembrane segment at 451-471 (IFSLLMGISNGYFGSVPMILA) threads the bilayer. Over 472–486 (AGKVSPKQRELAGNT) the chain is Cytoplasmic. Residues 487-509 (MTVSYMSGLTLGSAVAYCTYSLT) traverse the membrane as a helical segment. Over 510 to 530 (RDAHGSCLHASTANGSILAGL) the chain is Extracellular. A glycan (N-linked (GlcNAc...) asparagine) is linked at N523.

The protein belongs to the SLC29A/ENT transporter (TC 2.A.57) family. Post-translationally, N-glycosylated. In terms of tissue distribution, mainly expressed in brain and skeletal muscle. In brain, expressed in cerebellum, cerebral cortex, medulla oblongata, occipital pole, frontal and temporal lobes putamen, spinal cord, substancia nigra, hippocampus, caudate nucleus, nucleus accumbens, pons and choroid plexus. Expressed in heart, in both cardiomyocytes and vascular endothelial cells. Also expressed in adrenal gland, small intestine, pancreas, kidney, liver, bone marrow, lymph node. Located in endometrial stroma, where the expression is high in the proliferative phase, decreases during the secretory phase, and is no longer detectable in the menstrual phase.

The protein resides in the cell membrane. It is found in the apical cell membrane. The enzyme catalyses serotonin(out) = serotonin(in). It carries out the reaction dopamine(out) = dopamine(in). The catalysed reaction is (R)-noradrenaline(out) = (R)-noradrenaline(in). It catalyses the reaction (R)-adrenaline(out) = (R)-adrenaline(in). The enzyme catalyses histamine(out) = histamine(in). It carries out the reaction tyramine(in) = tyramine(out). The catalysed reaction is guanidine(out) = guanidine(in). It catalyses the reaction adenosine(in) = adenosine(out). Its activity is regulated as follows. Activated at acidic pH. Its function is as follows. Electrogenic voltage-dependent transporter that mediates the transport of a variety of endogenous bioactive amines, cationic xenobiotics and drugs. Utilizes the physiologic inside-negative membrane potential as a driving force to facilitate cellular uptake of organic cations. Functions as a Na(+)- and Cl(-)-independent bidirectional transporter. Substrate transport is pH-dependent and enhanced under acidic condition, which is most likely the result of allosteric changes in the transporter structure. Implicated in monoamine neurotransmitters uptake such as serotonin, dopamine, adrenaline/epinephrine, noradrenaline/norepinephrine, histamine and tyramine, thereby supporting a role in homeostatic regulation of aminergic neurotransmission in the central nervous system. Also responsible for the uptake of bioactive amines and drugs through the blood-cerebrospinal fluid (CSF) barrier, from the CSF into choroid plexus epithelial cells, thereby playing a significant role in the clearance of cationic neurotoxins, xenobiotics and metabolic waste in the brain. Involved in bidirectional transport of the purine nucleoside adenosine and plays a role in the regulation of extracellular adenosine concentrations in cardiac tissues, in particular during ischemia. May be involved in organic cation uptake from the tubular lumen into renal tubular cells, thereby contributing to organic cation reabsorption in the kidney. Also transports guanidine. The chain is Equilibrative nucleoside transporter 4 from Homo sapiens (Human).